The following is a 232-amino-acid chain: MAVISMKQLLEAGVHFGHQTRRWNPKMAPYIFTDRNGIYIIDLQKTVKKVEEAYNFIKQLAAEGETVLFVGTKKQAQEAVQEEAERCGMFYVNQRWLGGMLTNFQTIRRRIDRLQELEKMEENGSLEVLPKKEVAELMHEKEKLQKFLGGIKEMRRLPGALFVIDPRKERIAVAEARKLGIPIVAIVDTNCDPDEVDYVIPGNDDAIRAVRLLTAKMADAVLEGKQGEQLAE.

This sequence belongs to the universal ribosomal protein uS2 family.

The polypeptide is Small ribosomal subunit protein uS2 (Pelotomaculum thermopropionicum (strain DSM 13744 / JCM 10971 / SI)).